A 616-amino-acid polypeptide reads, in one-letter code: Chaperone protein HscA homolog (616 aa).

Belongs to the heat shock protein 70 family.

Functionally, chaperone involved in the maturation of iron-sulfur cluster-containing proteins. Has a low intrinsic ATPase activity which is markedly stimulated by HscB. The chain is Chaperone protein HscA homolog from Histophilus somni (strain 129Pt) (Haemophilus somnus).